Consider the following 134-residue polypeptide: Arsenate reductase 1 (134 aa).

Active-site nucleophile residues include cysteine 11, cysteine 83, and cysteine 90. 2 disulfide bridges follow: cysteine 11–cysteine 83 and cysteine 83–cysteine 90.

It belongs to the low molecular weight phosphotyrosine protein phosphatase family. Thioredoxin-coupled ArsC subfamily.

It localises to the cytoplasm. It catalyses the reaction arsenate + [thioredoxin]-dithiol + H(+) = arsenite + [thioredoxin]-disulfide + H2O. In terms of biological role, catalyzes the reduction of arsenate [As(V)] to arsenite [As(III)]. In Bacillus cereus (strain ATCC 10987 / NRS 248), this protein is Arsenate reductase 1.